The following is a 450-amino-acid chain: tRNA-2-methylthio-N(6)-dimethylallyladenosine synthase (450 aa).

Positions 7–127 (KRLYIKTYGC…LPELIARAHR (121 aa)) constitute an MTTase N-terminal domain. [4Fe-4S] cluster is bound by residues cysteine 16, cysteine 52, cysteine 90, cysteine 165, cysteine 169, and cysteine 172. The 228-residue stretch at 151-378 (QVSGVSAFLT…NQLLDEQQKA (228 aa)) folds into the Radical SAM core domain. One can recognise a TRAM domain in the interval 381 to 443 (ILQVGKTMPV…KMSLGGVLET (63 aa)).

It belongs to the methylthiotransferase family. MiaB subfamily. As to quaternary structure, monomer. [4Fe-4S] cluster serves as cofactor.

The protein resides in the cytoplasm. It catalyses the reaction N(6)-dimethylallyladenosine(37) in tRNA + (sulfur carrier)-SH + AH2 + 2 S-adenosyl-L-methionine = 2-methylsulfanyl-N(6)-dimethylallyladenosine(37) in tRNA + (sulfur carrier)-H + 5'-deoxyadenosine + L-methionine + A + S-adenosyl-L-homocysteine + 2 H(+). In terms of biological role, catalyzes the methylthiolation of N6-(dimethylallyl)adenosine (i(6)A), leading to the formation of 2-methylthio-N6-(dimethylallyl)adenosine (ms(2)i(6)A) at position 37 in tRNAs that read codons beginning with uridine. This chain is tRNA-2-methylthio-N(6)-dimethylallyladenosine synthase, found in Caulobacter sp. (strain K31).